The primary structure comprises 988 residues: Voltage-gated delayed rectifier potassium channel KCNH5 (988 aa).

The Cytoplasmic segment spans residues M1–W217. A PAS domain is found at Q12–S90. In terms of domain architecture, PAC spans N91–T143. The helical transmembrane segment at D218–F238 threads the bilayer. Topologically, residues K239–N243 are extracellular. The helical transmembrane segment at N244 to L264 threads the bilayer. Over N265–T291 the chain is Cytoplasmic. A helical membrane pass occupies residues W292–V312. Residues D313–L319 are Extracellular-facing. A helical; Voltage-sensor transmembrane segment spans residues F320–H340. The Cytoplasmic segment spans residues Y341–A346. The helical transmembrane segment at A347–W367 threads the bilayer. Residues Y368 to Y419 lie on the Extracellular side of the membrane. N403 carries an N-linked (GlcNAc...) asparagine glycan. The segment at residues V420 to P440 is an intramembrane region (pore-forming). The short motif at T432–N437 is the Selectivity filter element. Residues T441–K446 are Extracellular-facing. Residues M447–V467 form a helical membrane-spanning segment. Residues T468–F988 are Cytoplasmic-facing. Residue A550–T667 participates in a nucleoside 3',5'-cyclic phosphate binding. The tract at residues H704 to Q715 is calmodulin-binding. Positions K717 to Q742 are disordered. A compositionally biased stretch (polar residues) spans N721 to Q742. K785 is covalently cross-linked (Glycyl lysine isopeptide (Lys-Gly) (interchain with G-Cter in ubiquitin)). The interval G838–I890 is disordered. Over residues S871–L885 the composition is skewed to basic and acidic residues. A Phosphoserine modification is found at S883. The segment at T909–P948 is CAD (involved in subunit assembly). The interval D969–F988 is disordered. A compositionally biased stretch (basic and acidic residues) spans E977–F988.

The protein belongs to the potassium channel family. H (Eag) (TC 1.A.1.20) subfamily. Kv10.2/KCNH5 sub-subfamily. As to quaternary structure, homotetramer. The potassium channel is probably composed of a homo- or heterotetrameric complex of pore-forming alpha subunits that can associate with modulating beta subunits. Heteromultimer with KCNH1/EAG. Detected in brain, skeletal muscle, heart, placenta, lung and liver, and at low levels in kidney.

Its subcellular location is the membrane. The catalysed reaction is K(+)(in) = K(+)(out). Functionally, pore-forming (alpha) subunit of a voltage-gated delayed rectifier potassium channel that mediates outward-rectifying potassium currents which, on depolarization, reaches a steady-state level and do not inactivate. The kinetic is characterized by a slow activation time course and a small voltage dependence of the activation time constants, therefore, starts to open at more negative voltages. The activation kinetics depend on the prepulse potential and external divalent cation concentration. The time course of activation is biphasic with a fast and a slowly activating current component. With negative prepulses, the current activation is delayed and slowed down several fold, whereas more positive prepulses speed up activation, therefore the activation rate depends on holding potential. This is Voltage-gated delayed rectifier potassium channel KCNH5 from Homo sapiens (Human).